The primary structure comprises 425 residues: Glutamyl-tRNA reductase (425 aa).

Residues 47–50 (TCNR), Ser-107, 112–114 (EDQ), and Gln-118 each bind substrate. Cys-48 (nucleophile) is an active-site residue. 187–192 (GAGHMA) is an NADP(+) binding site.

The protein belongs to the glutamyl-tRNA reductase family. As to quaternary structure, homodimer.

It catalyses the reaction (S)-4-amino-5-oxopentanoate + tRNA(Glu) + NADP(+) = L-glutamyl-tRNA(Glu) + NADPH + H(+). It functions in the pathway porphyrin-containing compound metabolism; protoporphyrin-IX biosynthesis; 5-aminolevulinate from L-glutamyl-tRNA(Glu): step 1/2. Its pathway is porphyrin-containing compound metabolism; chlorophyll biosynthesis. Its function is as follows. Catalyzes the NADPH-dependent reduction of glutamyl-tRNA(Glu) to glutamate 1-semialdehyde (GSA). This chain is Glutamyl-tRNA reductase, found in Roseiflexus castenholzii (strain DSM 13941 / HLO8).